Consider the following 377-residue polypeptide: Mannan endo-1,4-beta-mannosidase A (377 aa).

A signal peptide spans M1–A18. W84 provides a ligand contact to substrate. An N-linked (GlcNAc...) asparagine glycan is attached at N105. Residue N197 participates in substrate binding. The active-site Proton donor is E198. N-linked (GlcNAc...) asparagine glycosylation occurs at N255. Y273 is a binding site for substrate. E306 functions as the Nucleophile in the catalytic mechanism. An N-linked (GlcNAc...) asparagine glycan is attached at N326. Position 336 (W336) interacts with substrate. An N-linked (GlcNAc...) asparagine glycan is attached at N357.

It belongs to the glycosyl hydrolase 5 (cellulase A) family.

It localises to the secreted. It carries out the reaction Random hydrolysis of (1-&gt;4)-beta-D-mannosidic linkages in mannans, galactomannans and glucomannans.. In terms of biological role, endo-1,4-mannanase, a crucial enzyme for depolymerization of seed galactomannans and wood galactoglucomannans. The sequence is that of Mannan endo-1,4-beta-mannosidase A (manA) from Aspergillus aculeatus.